The primary structure comprises 113 residues: Integration host factor subunit alpha (113 aa).

The disordered stretch occupies residues 88–113 (ALNGGVSDETEGADDDDDDEEGEGDE). The span at 95–113 (DETEGADDDDDDEEGEGDE) shows a compositional bias: acidic residues.

It belongs to the bacterial histone-like protein family. In terms of assembly, heterodimer of an alpha and a beta chain.

Its function is as follows. This protein is one of the two subunits of integration host factor, a specific DNA-binding protein that functions in genetic recombination as well as in transcriptional and translational control. The sequence is that of Integration host factor subunit alpha from Anaeromyxobacter dehalogenans (strain 2CP-C).